The primary structure comprises 655 residues: MGIFSIANQHIRFAVKLATAIVLALFVGFHFQLETPRWAVLTAAIVAAGPAFAAGGEPYSGAIRYRGFLRIIGTFIGCIAGLVIIIAMIRAPLLMILVCCIWAGFCTWISSLVRIENSYAWGLAGYTALIIVITIQPEPLLTPQFAVERCSEIVIGIVCAIMADLLFSPRSIKQEVDRELESLLVAQYQLMQLCIKHGDGEVVDKAWGDLVRRTTALQGMRSNLNMESSRWARANRRLKAINTLSLTLITQSCETYLIQNTRPELITDTFREFFDTPVETAQDVHKQLKRLRRVIAWTGERETPVTIYSWVAAATRYQLLKRGVISNTKINATEEEILQGEPEVKVESAERHHAMVNFWRTTLSCILGTLFWLWTGWTSGSGAMVMIAVVTSLAMRLPNPRMVAIDFIYGTLAALPLGLLYFLVIIPNTQQSMLLLCISLAVLGFFLGIEVQQRRLGSMGALASTINIIVLDNPMTFHFSQFLDSALGQIVGCVLAFTVILLVRDKSRDRTGRVLLNQFVSAAVSAMTTNVARRKENHLPALYQQLFLLMNKFPGDLPKFRLALTMIIAHQRLRDAPIPVNEDLSAFHRQMRRTADHVISARSDDKRRRYFGQLLEELEIYQEKLRIWQAPPQVTEPVHRLAGMLHKYQHALTDS.

A run of 11 helical transmembrane segments spans residues 13–33 (FAVK…HFQL), 38–58 (WAVL…GGEP), 69–89 (LRII…IAMI), 93–113 (LLMI…SSLV), 121–141 (WGLA…EPLL), 152–172 (EIVI…PRSI), 370–390 (LFWL…IAVV), 407–427 (FIYG…VIIP), 431–451 (QSML…GIEV), 459–479 (MGAL…TFHF), and 482–502 (FLDS…VILL).

The protein belongs to the aromatic acid exporter ArAE (TC 2.A.85) family.

The protein localises to the cell inner membrane. In terms of biological role, forms an efflux pump with AaeA. Could function as a metabolic relief valve, allowing to eliminate certain compounds when they accumulate to high levels in the cell. The chain is p-hydroxybenzoic acid efflux pump subunit AaeB from Shigella boydii serotype 18 (strain CDC 3083-94 / BS512).